Reading from the N-terminus, the 549-residue chain is Glucose-6-phosphate isomerase (549 aa).

E355 acts as the Proton donor in catalysis. Residues H387 and K515 contribute to the active site.

Belongs to the GPI family.

It localises to the cytoplasm. The catalysed reaction is alpha-D-glucose 6-phosphate = beta-D-fructose 6-phosphate. The protein operates within carbohydrate biosynthesis; gluconeogenesis. It functions in the pathway carbohydrate degradation; glycolysis; D-glyceraldehyde 3-phosphate and glycerone phosphate from D-glucose: step 2/4. Catalyzes the reversible isomerization of glucose-6-phosphate to fructose-6-phosphate. The polypeptide is Glucose-6-phosphate isomerase (Haemophilus influenzae (strain ATCC 51907 / DSM 11121 / KW20 / Rd)).